Reading from the N-terminus, the 322-residue chain is MEWQTRFSPLNLSTQDALPELSISLLDNLGMITMVGDDKKSYLHGQVTCDVVSLEKDQSMLGAHCDAKGKVWSVFRLFHHNDGYAMVQPKSAIEVELKEIKKYAVFSKVTIEESSDIVLGVAGENADAFISTLNADSGEVRTVEGGTAVKVASNRWLLALTAEAAQSLLEDSQATLTTHELWTRFDIEAALPYVAADAQNEHIPQALNVQALGGISFTKGCYTGQETVARAKYRGTNKRAMYIVKGATAEALGEGAIELERSVGENWRSVGALLTHYQFSDNQAMGLIVLPNNLDDDTRLRLVTQPECEWEIAALPYSLDDE.

W182 provides a ligand contact to folate.

This sequence belongs to the tRNA-modifying YgfZ family.

The protein resides in the cytoplasm. Its function is as follows. Folate-binding protein involved in regulating the level of ATP-DnaA and in the modification of some tRNAs. It is probably a key factor in regulatory networks that act via tRNA modification, such as initiation of chromosomal replication. This is tRNA-modifying protein YgfZ from Vibrio campbellii (strain ATCC BAA-1116).